The following is a 737-amino-acid chain: ATP-dependent RNA helicase SUV3, mitochondrial (737 aa).

The N-terminal 25 residues, 1–25 (MALVKYSTVFFPLRSLRLFVSIKKA), are a transit peptide targeting the mitochondrion. Positions 226–365 (EARKIRRHII…KSVLPLVKSI (140 aa)) constitute a Helicase ATP-binding domain. An ATP-binding site is contributed by 239–246 (GPTNSGKT). Positions 390–546 (PIKDGIKGLR…YLKTAVTWPT (157 aa)) constitute a Helicase C-terminal domain.

It belongs to the helicase family. MSU1 and SUV3 are the two components of the mitochondrial degradosome (mtEXO).

Its subcellular location is the mitochondrion matrix. The catalysed reaction is ATP + H2O = ADP + phosphate + H(+). Its function is as follows. Required for intron-independent turnover and processing of mitochondrial RNA. It is a key control element in nuclear-mitochondrial interactions. In Saccharomyces cerevisiae (strain ATCC 204508 / S288c) (Baker's yeast), this protein is ATP-dependent RNA helicase SUV3, mitochondrial (SUV3).